The sequence spans 419 residues: Isocitrate dehydrogenase [NADP] 1 (419 aa).

An NADP(+)-binding site is contributed by threonine 105. Positions 114, 116, 120, 130, and 154 each coordinate D-threo-isocitrate. Residue aspartate 308 participates in Mg(2+) binding. Residues 340-346, asparagine 353, tyrosine 392, and arginine 396 contribute to the NADP(+) site; that span reads HGTAPKY.

The protein belongs to the isocitrate and isopropylmalate dehydrogenases family. In terms of assembly, homodimer. Requires Mg(2+) as cofactor. Mn(2+) serves as cofactor.

It carries out the reaction D-threo-isocitrate + NADP(+) = 2-oxoglutarate + CO2 + NADPH. IDH activity is not significantly affected by monovalent cations. The combined addition of Mn(2+) and another divalent cation results in the decrease of the activity. Its function is as follows. Catalyzes the oxidative decarboxylation of isocitrate to 2-oxoglutarate and carbon dioxide with the concomitant reduction of NADP(+). Cannot use NAD(+). The chain is Isocitrate dehydrogenase [NADP] 1 from Psychrobacter sp. (strain 13A).